The following is a 113-amino-acid chain: Large ribosomal subunit protein bL20c (113 aa).

The protein belongs to the bacterial ribosomal protein bL20 family.

It localises to the plastid. It is found in the chloroplast. Binds directly to 23S ribosomal RNA and is necessary for the in vitro assembly process of the 50S ribosomal subunit. It is not involved in the protein synthesizing functions of that subunit. This Nephroselmis olivacea (Green alga) protein is Large ribosomal subunit protein bL20c.